We begin with the raw amino-acid sequence, 444 residues long: Transcription activator AFTR-2 (444 aa).

A DNA-binding region (zn(2)-C6 fungal-type) is located at residues 16-43; the sequence is CDFCTQSKLRCNKNKPSCRRCTLQQQPC. The segment at 49-88 is disordered; it reads RRTGRPPKHPRKANDCQEANGQHGDQDPVTSTPGGSYQQQ. The span at 50-59 shows a compositional bias: basic residues; sequence RTGRPPKHPR. A compositionally biased stretch (polar residues) spans 76–88; it reads PVTSTPGGSYQQQ.

Its subcellular location is the nucleus. Its function is as follows. Transcription factor that regulates the expression of the gene clusters that mediate the biosynthesis of the host-selective toxins (HSTs) AF-toxins responsible for Alternaria black spot of strawberry disease by the strawberry pathotype. On cellular level, AF-toxins affect plasma membrane of susceptible cells and cause a sudden increase in loss of K(+) after a few minutes of toxin treatment. This chain is Transcription activator AFTR-2, found in Alternaria alternata (Alternaria rot fungus).